Reading from the N-terminus, the 353-residue chain is Uroporphyrinogen decarboxylase (353 aa).

Substrate is bound by residues 30–34, Asp79, Tyr154, Ser209, and His332; that span reads RQAGR.

Belongs to the uroporphyrinogen decarboxylase family. Homodimer.

The protein localises to the cytoplasm. It carries out the reaction uroporphyrinogen III + 4 H(+) = coproporphyrinogen III + 4 CO2. It participates in porphyrin-containing compound metabolism; protoporphyrin-IX biosynthesis; coproporphyrinogen-III from 5-aminolevulinate: step 4/4. Its function is as follows. Catalyzes the decarboxylation of four acetate groups of uroporphyrinogen-III to yield coproporphyrinogen-III. This chain is Uroporphyrinogen decarboxylase, found in Mycobacterium marinum (strain ATCC BAA-535 / M).